The sequence spans 125 residues: UPF0102 protein PBPRA3228 (125 aa).

Belongs to the UPF0102 family.

The chain is UPF0102 protein PBPRA3228 from Photobacterium profundum (strain SS9).